The primary structure comprises 217 residues: Probable glutathione S-transferase DHAR4 (217 aa).

Residues Lys8 and Asp19 each contribute to the glutathione site. L-ascorbate-binding residues include Lys8 and Asp19. The region spanning 10 to 85 (ASGAPDVLGD…DLIVGIIEEK (76 aa)) is the GST N-terminal domain. Cys20 (nucleophile) is an active-site residue. The Glutathione-binding signature appears at 20–25 (CPFGQR). Glutathione contacts are provided by Lys47, Ser75, His164, and Trp211. One can recognise a GST C-terminal domain in the interval 86 to 217 (YPEPSLVTFP…IASWAPKLDV (132 aa)). Lys214 serves as a coordination point for L-ascorbate.

The protein belongs to the GST superfamily. DHAR family. As to quaternary structure, monomer.

Its subcellular location is the cytoplasm. The protein localises to the cytosol. It catalyses the reaction RX + glutathione = an S-substituted glutathione + a halide anion + H(+). The enzyme catalyses L-dehydroascorbate + 2 glutathione = glutathione disulfide + L-ascorbate. Exhibits glutathione-dependent thiol transferase and dehydroascorbate (DHA) reductase activities. The chain is Probable glutathione S-transferase DHAR4 (DHAR4) from Arabidopsis thaliana (Mouse-ear cress).